Reading from the N-terminus, the 76-residue chain is Conotoxin PnMKLT1-1111 (76 aa).

Positions methionine 1–alanine 22 are cleaved as a signal peptide. A propeptide spanning residues valine 23 to aspartate 50 is cleaved from the precursor. Cystine bridges form between cysteine 53/cysteine 67, cysteine 60/cysteine 71, and cysteine 66/cysteine 75.

Belongs to the conotoxin O1 superfamily. Expressed by the venom duct.

It localises to the secreted. The chain is Conotoxin PnMKLT1-1111 from Conus pennaceus (Feathered cone).